Reading from the N-terminus, the 373-residue chain is Putative F-box protein At1g76830 (373 aa).

Positions 4–49 constitute an F-box domain; sequence ITSFENLPEELKREILLRMSPNSLVTCSRVSKKLASMIRTKSFKEL.

The protein is Putative F-box protein At1g76830 of Arabidopsis thaliana (Mouse-ear cress).